The chain runs to 986 residues: Bifunctional glutamine synthetase adenylyltransferase/adenylyl-removing enzyme (986 aa).

Positions 1–471 (MAEAIERSLS…RYAQLFEQEA (471 aa)) are adenylyl removase. Residues 475-986 (TETGNLVFTG…RIFQGVVAAA (512 aa)) are adenylyl transferase.

This sequence belongs to the GlnE family. Mg(2+) serves as cofactor.

The enzyme catalyses [glutamine synthetase]-O(4)-(5'-adenylyl)-L-tyrosine + phosphate = [glutamine synthetase]-L-tyrosine + ADP. The catalysed reaction is [glutamine synthetase]-L-tyrosine + ATP = [glutamine synthetase]-O(4)-(5'-adenylyl)-L-tyrosine + diphosphate. Functionally, involved in the regulation of glutamine synthetase GlnA, a key enzyme in the process to assimilate ammonia. When cellular nitrogen levels are high, the C-terminal adenylyl transferase (AT) inactivates GlnA by covalent transfer of an adenylyl group from ATP to specific tyrosine residue of GlnA, thus reducing its activity. Conversely, when nitrogen levels are low, the N-terminal adenylyl removase (AR) activates GlnA by removing the adenylyl group by phosphorolysis, increasing its activity. The regulatory region of GlnE binds the signal transduction protein PII (GlnB) which indicates the nitrogen status of the cell. The chain is Bifunctional glutamine synthetase adenylyltransferase/adenylyl-removing enzyme from Rhizobium meliloti (strain 1021) (Ensifer meliloti).